Here is a 65-residue protein sequence, read N- to C-terminus: Stress-associated endoplasmic reticulum protein 2 (65 aa).

A helical membrane pass occupies residues 38–58 (GPWLLALFVFVVCGSAIFQII).

The protein belongs to the RAMP4 family. In terms of assembly, interacts with SEC61B, SEC61A1 and the SEC61 complex. Interacts with CANX.

The protein resides in the membrane. It is found in the endoplasmic reticulum membrane. Its function is as follows. Interacts with target proteins during their translocation into the lumen of the endoplasmic reticulum. Protects unfolded target proteins against degradation during ER stress. May facilitate glycosylation of target proteins after termination of ER stress. May modulate the use of N-glycosylation sites on target proteins. This is Stress-associated endoplasmic reticulum protein 2 (SERP2) from Bos taurus (Bovine).